Reading from the N-terminus, the 170-residue chain is Thialysine N-epsilon-acetyltransferase (170 aa).

The N-acetyltransferase domain occupies 4-166 (VLIREAKEGD…FRFEGEAMRE (163 aa)). 27-28 (YE) serves as a coordination point for substrate. The residue at position 29 (Lys-29) is an N6-acetyllysine. Substrate is bound at residue Glu-92. Acetyl-CoA is bound by residues 94-96 (IYV), 102-107 (GQGIGS), 133-135 (NKK), and Tyr-140. The active-site Proton donor is the Tyr-140. Position 152 (Glu-152) interacts with substrate.

Belongs to the acetyltransferase family. Homodimer.

The protein resides in the cytoplasm. The catalysed reaction is S-(2-aminoethyl)-L-cysteine + acetyl-CoA = S-(2-acetamidoethyl)-L-cysteine + CoA + H(+). It catalyses the reaction an alkane-alpha,omega-diamine + acetyl-CoA = an N-acetylalkane-alpha,omega-diamine + CoA + H(+). Catalyzes the N-acetylation of the amino acid thialysine (S-(2-aminoethyl)-L-cysteine), a L-lysine analog with the 4-methylene group substituted with a sulfur. May also catalyze acetylation of polyamines, such as norspermidine, spermidine or spermine. However, ability to acetylate polyamines is weak, suggesting that it does not act as a diamine acetyltransferase in vivo. This is Thialysine N-epsilon-acetyltransferase from Sus scrofa (Pig).